The primary structure comprises 229 residues: Allatostatin-A (229 aa).

The signal sequence occupies residues 1 to 18; it reads MLSTSLPVCFLVIGAALC. Residues 19–48 constitute a propeptide that is removed on maturation; it reads APERMQNDPDPHDSTAQGSDNHSDHIAPLA. The segment at 23–46 is disordered; it reads MQNDPDPHDSTAQGSDNHSDHIAP. Leu-58 bears the Leucine amide mark. A propeptide spanning residues 62–80 is cleaved from the precursor; sequence AYSYVSEYKRLPVYNFGLG. Leu-90 carries the leucine amide modification. A propeptide spanning residues 94–130 is cleaved from the precursor; sequence SVDEDQTNDDQQQIMNNDLDQAALAEFFDQYDDAGYE. Leucine amide is present on Leu-140. The propeptide occupies 144-152; it reads FADDDTSEE. Leucine amide is present on residues Leu-162, Leu-173, Leu-184, Leu-196, and Leu-210. A propeptide spanning residues 214–229 is cleaved from the precursor; it reads SADDASTEDSDNYFDV.

This sequence belongs to the allatostatin family. As to expression, allatostatin-A-1: Expressed in antennal lobe (AL), corpora cardiaca (CC), corpora allata (CA) and gnathal ganglion (GNG) (at protein level). Expression in AL and GNG detected in most animals, in CC and CA in some animals (at protein level). Allatostatin-A-3: Expressed in antennal lobe (AL), corpora cardiaca (CC), corpora allata (CA) and gnathal ganglion (GNG) (at protein level). Expression in AL detected in all animals, in GNG, CC and CA in most animals (at protein level). Allatostatin-A-4: Expressed in antennal lobe (AL), corpora cardiaca (CC), corpora allata (CA) and gnathal ganglion (GNG) in all animals (at protein level). Allatostatin-A-5: Expressed in antennal lobe (AL), corpora cardiaca (CC), corpora allata (CA) and gnathal ganglion (GNG) in all animals (at protein level). Allatostatin-A-6: Expressed in antennal lobe (AL) and gnathal ganglion (GNG) (at protein level). Expression in AL detected in some animals, in GNG in few animals (at protein level). Not expressed in corpora cardiaca (CC) and corpora allata (CA) (at protein level). Allatostatin-A-7: Expressed in antennal lobe (AL), corpora cardiaca (CC), corpora allata (CA) and gnathal ganglion (GNG) (at protein level). Expression in AL detected in all animals, in GNG, CC and CA in most animals (at protein level). Allatostatin-A-8: Expressed in antennal lobe (AL), corpora cardiaca (CC), corpora allata (CA) and gnathal ganglion (GNG) (at protein level). Expression in AL detected in all animals, in GNG, CC and CA in most animals (at protein level). Allatostatin-A-9: Expressed in antennal lobe (AL), corpora cardiaca (CC), corpora allata (CA) and gnathal ganglion (GNG) (at protein level). Expression in AL detected in all animals, in GNG in most animals and in CC and CA in some animals (at protein level).

The protein localises to the secreted. Functionally, neuropeptide inhibitors of juvenile hormone synthesis and gut muscle contraction. The sequence is that of Allatostatin-A from Agrotis ipsilon (Black cutworm moth).